The following is a 471-amino-acid chain: Trigger factor (471 aa).

Residues G165–P244 form the PPIase FKBP-type domain. The tract at residues V407–S471 is disordered. The span at D416–P443 shows a compositional bias: acidic residues.

Belongs to the FKBP-type PPIase family. Tig subfamily.

Its subcellular location is the cytoplasm. The catalysed reaction is [protein]-peptidylproline (omega=180) = [protein]-peptidylproline (omega=0). In terms of biological role, involved in protein export. Acts as a chaperone by maintaining the newly synthesized protein in an open conformation. Functions as a peptidyl-prolyl cis-trans isomerase. In Kineococcus radiotolerans (strain ATCC BAA-149 / DSM 14245 / SRS30216), this protein is Trigger factor.